The chain runs to 637 residues: Phosphomethylpyrimidine synthase (637 aa).

Substrate contacts are provided by residues asparagine 242, methionine 271, tyrosine 300, histidine 336, 356–358, 397–400, and glutamate 436; these read SRG and DGLR. Histidine 440 contacts Zn(2+). Tyrosine 463 lines the substrate pocket. Zn(2+) is bound at residue histidine 504. Residues cysteine 584, cysteine 587, and cysteine 592 each contribute to the [4Fe-4S] cluster site.

This sequence belongs to the ThiC family. Homodimer. The cofactor is [4Fe-4S] cluster.

It catalyses the reaction 5-amino-1-(5-phospho-beta-D-ribosyl)imidazole + S-adenosyl-L-methionine = 4-amino-2-methyl-5-(phosphooxymethyl)pyrimidine + CO + 5'-deoxyadenosine + formate + L-methionine + 3 H(+). The protein operates within cofactor biosynthesis; thiamine diphosphate biosynthesis. Functionally, catalyzes the synthesis of the hydroxymethylpyrimidine phosphate (HMP-P) moiety of thiamine from aminoimidazole ribotide (AIR) in a radical S-adenosyl-L-methionine (SAM)-dependent reaction. The chain is Phosphomethylpyrimidine synthase from Bordetella bronchiseptica (strain ATCC BAA-588 / NCTC 13252 / RB50) (Alcaligenes bronchisepticus).